The following is an 853-amino-acid chain: Envelope glycoprotein gp160 (853 aa).

The first 32 residues, 1 to 32, serve as a signal peptide directing secretion; sequence MRVKEKYQHLWRWGWKWGIMLLGILMICSATE. Over 33–682 the chain is Extracellular; sequence NLWVTVYYGV…ITNWLWYIKI (650 aa). Cysteines 54 and 74 form a disulfide. 16 N-linked (GlcNAc...) asparagine; by host glycosylation sites follow: asparagine 88, asparagine 136, asparagine 141, asparagine 156, asparagine 160, asparagine 186, asparagine 195, asparagine 232, asparagine 239, asparagine 260, asparagine 274, asparagine 287, asparagine 293, asparagine 299, asparagine 330, and asparagine 354. Intrachain disulfides connect cysteine 119–cysteine 203, cysteine 126–cysteine 194, cysteine 131–cysteine 157, cysteine 216–cysteine 245, and cysteine 226–cysteine 237. The segment at 131–156 is V1; the sequence is CTDLKNDTNTNSSNGRMIMEKGEIKN. The segment at 157–194 is V2; sequence CSFNISTSIRNKVQKEYAFFYKLDIRPIDNTTYRLISC. The interval 294 to 328 is V3; sequence CTRPNNNTRKSIRIQRGPGRAFVTIGKIGNMRQAH. A disulfide bond links cysteine 294 and cysteine 329. The tract at residues 362-372 is CD4-binding loop; that stretch reads SSGGDPEIVTH. Intrachain disulfides connect cysteine 376–cysteine 443 and cysteine 383–cysteine 416. Residues 383-416 form a V4 region; that stretch reads CNSTQLFNSTWFNSTWSTEGSNNTEGSDTITLPC. N-linked (GlcNAc...) asparagine; by host glycans are attached at residues asparagine 384, asparagine 390, asparagine 395, asparagine 404, asparagine 446, and asparagine 461. 2 V5 regions span residues 459 to 469 and 461 to 469; these read NTNESEVFRPG and NESEVFRPG. The fusion peptide stretch occupies residues 510 to 530; sequence AVGIGALFLGFLGAAGSTMGA. Positions 572–590 are immunosuppression; the sequence is KQLQARILAVERYLKDQQL. Residues cysteine 596 and cysteine 602 are joined by a disulfide bond. Asparagine 609, asparagine 614, asparagine 623, asparagine 635, and asparagine 672 each carry an N-linked (GlcNAc...) asparagine; by host glycan. The stretch at 631–665 forms a coiled coil; that stretch reads REINNYTSLIHSLIDESQNQQEKNEQELLELDKWA. Positions 660–681 are MPER; binding to GalCer; that stretch reads ELDKWASLWNWFNITNWLWYIK. Residues 683–703 traverse the membrane as a helical segment; sequence FIMIVGGLVGLRIVFAVLSIV. The Cytoplasmic portion of the chain corresponds to 704-853; it reads NRVRQGYSPL…RIRQGLERIL (150 aa). A YXXL motif; contains endocytosis signal motif is present at residues 710–713; it reads YSPL. Residues 717-741 are disordered; sequence THLPNRGGPDRPEGIEEEGGERDRD. Cysteine 762 carries the S-palmitoyl cysteine; by host lipid modification.

It belongs to the HIV-1 env protein family. In terms of assembly, the mature envelope protein (Env) consists of a homotrimer of non-covalently associated gp120-gp41 heterodimers. The resulting complex protrudes from the virus surface as a spike. There seems to be as few as 10 spikes on the average virion. Interacts with host CD4, CCR5 and CXCR4. Gp120 also interacts with the C-type lectins CD209/DC-SIGN and CLEC4M/DC-SIGNR (collectively referred to as DC-SIGN(R)). Gp120 and gp41 interact with GalCer. Gp120 interacts with host ITGA4/ITGB7 complex; on CD4+ T-cells, this interaction results in rapid activation of integrin ITGAL/LFA-1, which facilitates efficient cell-to-cell spreading of HIV-1. Gp120 interacts with cell-associated heparan sulfate; this interaction increases virus infectivity on permissive cells and may be involved in infection of CD4- cells. As to quaternary structure, the mature envelope protein (Env) consists of a homotrimer of non-covalently associated gp120-gp41 heterodimers. The resulting complex protrudes from the virus surface as a spike. There seems to be as few as 10 spikes on the average virion. Post-translationally, highly glycosylated by host. The high number of glycan on the protein is reffered to as 'glycan shield' because it contributes to hide protein sequence from adaptive immune system. Palmitoylation of the transmembrane protein and of Env polyprotein (prior to its proteolytic cleavage) is essential for their association with host cell membrane lipid rafts. Palmitoylation is therefore required for envelope trafficking to classical lipid rafts, but not for viral replication. In terms of processing, specific enzymatic cleavages in vivo yield mature proteins. Envelope glycoproteins are synthesized as an inactive precursor that is heavily N-glycosylated and processed likely by host cell furin in the Golgi to yield the mature SU and TM proteins. The cleavage site between SU and TM requires the minimal sequence [KR]-X-[KR]-R. About 2 of the 9 disulfide bonds of gp41 are reduced by P4HB/PDI, following binding to CD4 receptor.

The protein localises to the virion membrane. It localises to the host cell membrane. It is found in the host endosome membrane. Its function is as follows. Oligomerizes in the host endoplasmic reticulum into predominantly trimers. In a second time, gp160 transits in the host Golgi, where glycosylation is completed. The precursor is then proteolytically cleaved in the trans-Golgi and thereby activated by cellular furin or furin-like proteases to produce gp120 and gp41. In terms of biological role, attaches the virus to the host lymphoid cell by binding to the primary receptor CD4. This interaction induces a structural rearrangement creating a high affinity binding site for a chemokine coreceptor like CXCR4 and/or CCR5. Acts as a ligand for CD209/DC-SIGN and CLEC4M/DC-SIGNR, which are respectively found on dendritic cells (DCs), and on endothelial cells of liver sinusoids and lymph node sinuses. These interactions allow capture of viral particles at mucosal surfaces by these cells and subsequent transmission to permissive cells. HIV subverts the migration properties of dendritic cells to gain access to CD4+ T-cells in lymph nodes. Virus transmission to permissive T-cells occurs either in trans (without DCs infection, through viral capture and transmission), or in cis (following DCs productive infection, through the usual CD4-gp120 interaction), thereby inducing a robust infection. In trans infection, bound virions remain infectious over days and it is proposed that they are not degraded, but protected in non-lysosomal acidic organelles within the DCs close to the cell membrane thus contributing to the viral infectious potential during DCs' migration from the periphery to the lymphoid tissues. On arrival at lymphoid tissues, intact virions recycle back to DCs' cell surface allowing virus transmission to CD4+ T-cells. Acts as a class I viral fusion protein. Under the current model, the protein has at least 3 conformational states: pre-fusion native state, pre-hairpin intermediate state, and post-fusion hairpin state. During fusion of viral and target intracellular membranes, the coiled coil regions (heptad repeats) assume a trimer-of-hairpins structure, positioning the fusion peptide in close proximity to the C-terminal region of the ectodomain. The formation of this structure appears to drive apposition and subsequent fusion of viral and target cell membranes. Complete fusion occurs in host cell endosomes and is dynamin-dependent, however some lipid transfer might occur at the plasma membrane. The virus undergoes clathrin-dependent internalization long before endosomal fusion, thus minimizing the surface exposure of conserved viral epitopes during fusion and reducing the efficacy of inhibitors targeting these epitopes. Membranes fusion leads to delivery of the nucleocapsid into the cytoplasm. The sequence is that of Envelope glycoprotein gp160 from Human immunodeficiency virus type 1 group M subtype B (isolate MFA) (HIV-1).